The sequence spans 198 residues: dTTP/UTP pyrophosphatase (198 aa).

Aspartate 78 acts as the Proton acceptor in catalysis.

It belongs to the Maf family. YhdE subfamily. The cofactor is a divalent metal cation.

It localises to the cytoplasm. The catalysed reaction is dTTP + H2O = dTMP + diphosphate + H(+). The enzyme catalyses UTP + H2O = UMP + diphosphate + H(+). Its function is as follows. Nucleoside triphosphate pyrophosphatase that hydrolyzes dTTP and UTP. May have a dual role in cell division arrest and in preventing the incorporation of modified nucleotides into cellular nucleic acids. In Chromobacterium violaceum (strain ATCC 12472 / DSM 30191 / JCM 1249 / CCUG 213 / NBRC 12614 / NCIMB 9131 / NCTC 9757 / MK), this protein is dTTP/UTP pyrophosphatase.